A 556-amino-acid polypeptide reads, in one-letter code: Probable Xaa-Pro aminopeptidase SS1G_06948 (556 aa).

Asp305, Asp316, Glu460, and Glu501 together coordinate Mn(2+).

It belongs to the peptidase M24B family. Requires Mn(2+) as cofactor.

It carries out the reaction Release of any N-terminal amino acid, including proline, that is linked to proline, even from a dipeptide or tripeptide.. Catalyzes the removal of a penultimate prolyl residue from the N-termini of peptides. The protein is Probable Xaa-Pro aminopeptidase SS1G_06948 of Sclerotinia sclerotiorum (strain ATCC 18683 / 1980 / Ss-1) (White mold).